A 345-amino-acid chain; its full sequence is uncharacterized protein (345 aa).

This sequence belongs to the transketolase family. Thiamine diphosphate is required as a cofactor.

This is an uncharacterized protein from Sinorhizobium fredii (strain NBRC 101917 / NGR234).